A 363-amino-acid polypeptide reads, in one-letter code: Membrane-bound lytic murein transglycosylase C (363 aa).

Residues 1–15 (MKKYIVFAIIPFLFA) form the signal peptide. The N-palmitoyl cysteine moiety is linked to residue C16. C16 carries the S-diacylglycerol cysteine lipid modification.

This sequence belongs to the transglycosylase Slt family.

Its subcellular location is the cell outer membrane. It catalyses the reaction Exolytic cleavage of the (1-&gt;4)-beta-glycosidic linkage between N-acetylmuramic acid (MurNAc) and N-acetylglucosamine (GlcNAc) residues in peptidoglycan, from either the reducing or the non-reducing ends of the peptidoglycan chains, with concomitant formation of a 1,6-anhydrobond in the MurNAc residue.. Functionally, murein-degrading enzyme. May play a role in recycling of muropeptides during cell elongation and/or cell division. This Histophilus somni (strain 129Pt) (Haemophilus somnus) protein is Membrane-bound lytic murein transglycosylase C.